Reading from the N-terminus, the 275-residue chain is 1-deoxy-11-beta-hydroxypentalenate dehydrogenase (275 aa).

12-36 serves as a coordination point for NAD(+); sequence GAASGIGLALSARFARAGAGVVMAD. Position 144 (Ser144) interacts with substrate. Tyr157 (proton acceptor) is an active-site residue. NAD(+) is bound at residue Lys161.

It belongs to the short-chain dehydrogenases/reductases (SDR) family.

It carries out the reaction 1-deoxy-11beta-hydroxypentalenate + NAD(+) = 1-deoxy-11-oxopentalenate + NADH + H(+). The protein operates within antibiotic biosynthesis; pentalenolactone biosynthesis. In terms of biological role, catalyzes the oxidation of 1-deoxy-11-beta-hydroxypentalenic acid to 1-deoxy-11-oxopentalenic acid in the biosynthesis of pentalenolactone antibiotic. This Streptomyces exfoliatus (Streptomyces hydrogenans) protein is 1-deoxy-11-beta-hydroxypentalenate dehydrogenase (penF).